Reading from the N-terminus, the 172-residue chain is Adenine phosphoribosyltransferase (172 aa).

Belongs to the purine/pyrimidine phosphoribosyltransferase family. Homodimer.

The protein resides in the cytoplasm. It catalyses the reaction AMP + diphosphate = 5-phospho-alpha-D-ribose 1-diphosphate + adenine. It functions in the pathway purine metabolism; AMP biosynthesis via salvage pathway; AMP from adenine: step 1/1. Catalyzes a salvage reaction resulting in the formation of AMP, that is energically less costly than de novo synthesis. The polypeptide is Adenine phosphoribosyltransferase (Clostridium botulinum (strain ATCC 19397 / Type A)).